The sequence spans 117 residues: Large ribosomal subunit protein bL20c (117 aa).

It belongs to the bacterial ribosomal protein bL20 family.

Its subcellular location is the plastid. The protein localises to the chloroplast. Its function is as follows. Binds directly to 23S ribosomal RNA and is necessary for the in vitro assembly process of the 50S ribosomal subunit. It is not involved in the protein synthesizing functions of that subunit. The protein is Large ribosomal subunit protein bL20c of Gossypium hirsutum (Upland cotton).